A 735-amino-acid chain; its full sequence is Transcription factor RFX4 (735 aa).

The interval 25–59 is disordered; that stretch reads SESKRFSSHSSIGNISNDENEEKENNRASKPHSTP. The DNA-binding element occupies 44–126; the sequence is NEEKENNRAS…RRLGTRGQSK (83 aa). The segment at residues 61–136 is a DNA-binding region (RFX-type winged-helix); it reads TLQWLEENYE…YHYYGIAVKE (76 aa). Residues 315-487 form a necessary for dimerization region; the sequence is RFSQILKRQT…NELMRAMKGE (173 aa).

The protein belongs to the RFX family.

Its subcellular location is the nucleus. May activate transcription by interacting directly with the X-box. This chain is Transcription factor RFX4 (rfx4), found in Danio rerio (Zebrafish).